Here is a 111-residue protein sequence, read N- to C-terminus: PSGYAVREAGPPAYYRPNSDNRRQGGRERLASTSDKGSMAVESAKETRYCAVCNDYASGYHYGVWSCEGCKAFFKRSIQGHNDYMCPATNQCTIDKNRRKSCQACRLRKCY.

A disordered region spans residues P1–E42. A modulating region spans residues P1–Y49. A compositionally biased stretch (basic and acidic residues) spans S19 to L30. Position 32 is a phosphoserine (S32). 2 consecutive NR C4-type zinc fingers follow at residues C50 to C70 and C86 to C110. Positions C50–Y111 form a DNA-binding region, nuclear receptor.

The protein belongs to the nuclear hormone receptor family. NR3 subfamily. Binds DNA as a homodimer. Can form a heterodimer with ESR2. Interacts with coactivator NCOA5. Interacts with PELP1, the interaction is enhanced by 17-beta-estradiol; the interaction increases ESR1 transcriptional activity. Interacts with NCOA7; the interaction is ligand-inducible. Interacts with AKAP13, CUEDC2, HEXIM1, KDM5A, MAP1S, SMARD1, and UBE1C. Interacts with MUC1; the interaction is stimulated by 7 beta-estradiol (E2) and enhances ESR1-mediated transcription. Interacts with DNTTIP2, and UIMC1. Interacts with KMT2D/MLL2. Interacts with ATAD2; the interaction is enhanced by estradiol. Interacts with KIF18A and LDB1. Interacts with RLIM (via its C-terminus). Interacts with MACROD1. Interacts with SH2D4A and PLCG. Interacts with SH2D4A; the interaction blocks binding to PLCG and inhibits estrogen-induced cell proliferation. Interacts with DYNLL1. Interacts with CCDC62; the interaction requires estradiol and appears to enhance the transcription of target genes. Interacts with NR2C1; the interaction prevents homodimerization of ESR1 and suppresses its transcriptional activity and cell growth. Interacts with DNAAF4. Interacts with PRMT2. Interacts with RBFOX2. Interacts with EP300; the interaction is estrogen-dependent and enhanced by CITED1. Interacts with CITED1; the interaction is estrogen-dependent. Interacts with FAM120B, FOXL2, PHB2 and SLC30A9. Interacts with coactivators NCOA3 and NCOA6. Interacts with STK3/MST2 only in the presence of SAV1 and vice-versa. Binds to CSNK1D. Interacts with NCOA2; NCOA2 can interact with ESR1 AF-1 and AF-2 domains simultaneously and mediate their transcriptional synergy. Interacts with DDX5. Interacts with NCOA1; the interaction seems to require a self-association of N-terminal and C-terminal regions. Interacts with ZNF366, DDX17, NFKB1, RELA, SP1 and SP3. Interacts with NRIP1. Interacts with GPER1; the interaction occurs in an estrogen-dependent manner. Interacts with CLOCK and the interaction is stimulated by estrogen. Interacts with TRIP4 (ufmylated); estrogen dependent. Interacts with LMTK3; the interaction phosphorylates ESR1 (in vitro) and protects it against proteasomal degradation. Interacts with CCAR2 (via N-terminus) in a ligand-independent manner. Interacts with ZFHX3. Interacts with SFR1 in a ligand-dependent and -independent manner. Interacts with DCAF13, LATS1 and DCAF1; regulates ESR1 ubiquitination and ubiquitin-mediated proteasomal degradation. Interacts (via DNA-binding domain) with POU4F2 (C-terminus); this interaction increases the estrogen receptor ESR1 transcriptional activity in a DNA- and ligand 17-beta-estradiol-independent manner. Interacts with ESRRB isoform 1. Interacts with UBE3A and WBP2. Interacts with GTF2B. Interacts with RBM39. In the absence of hormonal ligand, interacts with TACC1. Interacts with PI3KR1 or PI3KR2 and PTK2/FAK1. Interacts with SRC. Interacts with BAG1; the interaction is promoted in the absence of estradiol (17-beta-estradiol/E2). Interacts with and ubiquitinated by STUB1; the interaction is promoted in the absence of estradiol (17-beta-estradiol/E2). Interacts with NEDD8. Ubiquitinated; regulated by LATS1 via DCAF1 it leads to ESR1 proteasomal degradation. Deubiquitinated by OTUB1. Ubiquitinated by STUB1/CHIP; in the CA1 hippocampal region following loss of endogenous circulating estradiol (17-beta-estradiol/E2). Ubiquitinated by UBR5, leading to its degradation: UBR5 specifically recognizes and binds ligand-bound ESR1 when it is not associated with coactivators (NCOAs). In presence of NCOAs, the UBR5-degron is not accessible, preventing its ubiquitination and degradation. Post-translationally, dimethylated by PRMT1. Demethylated by JMJD6. In terms of processing, palmitoylated by ZDHHC7 and ZDHHC21. This modification is required for plasma membrane targeting and for rapid intracellular signaling via ERK and AKT kinases and cAMP generation, but not for signaling mediated by the nuclear hormone receptor. Phosphorylated by cyclin A/CDK2 and CK1. Phosphorylation probably enhances transcriptional activity. Dephosphorylation by PPP5C inhibits its transactivation activity. Phosphorylated by LMTK3 (in vitro).

It is found in the nucleus. The protein resides in the cytoplasm. Its subcellular location is the golgi apparatus. It localises to the cell membrane. Its function is as follows. Nuclear hormone receptor. The steroid hormones and their receptors are involved in the regulation of eukaryotic gene expression and affect cellular proliferation and differentiation in target tissues. Ligand-dependent nuclear transactivation involves either direct homodimer binding to a palindromic estrogen response element (ERE) sequence or association with other DNA-binding transcription factors, such as AP-1/c-Jun, c-Fos, ATF-2, Sp1 and Sp3, to mediate ERE-independent signaling. Ligand binding induces a conformational change allowing subsequent or combinatorial association with multiprotein coactivator complexes through LXXLL motifs of their respective components. Mutual transrepression occurs between the estrogen receptor (ER) and NF-kappa-B in a cell-type specific manner. Decreases NF-kappa-B DNA-binding activity and inhibits NF-kappa-B-mediated transcription from the IL6 promoter and displace RELA/p65 and associated coregulators from the promoter. Recruited to the NF-kappa-B response element of the CCL2 and IL8 promoters and can displace CREBBP. Present with NF-kappa-B components RELA/p65 and NFKB1/p50 on ERE sequences. Can also act synergistically with NF-kappa-B to activate transcription involving respective recruitment adjacent response elements; the function involves CREBBP. Can activate the transcriptional activity of TFF1. Also mediates membrane-initiated estrogen signaling involving various kinase cascades. Essential for MTA1-mediated transcriptional regulation of BRCA1 and BCAS3. Maintains neuronal survival in response to ischemic reperfusion injury when in the presence of circulating estradiol (17-beta-estradiol/E2). The protein is Estrogen receptor (ESR1) of Ovis aries (Sheep).